Here is a 451-residue protein sequence, read N- to C-terminus: MGKYFGTDGVRGVANKELTPELAFKLGRYGGYVLAHNEDKKHPQVLVGRDTRVSGEMLESALIAGLISIGAEVMRLGVISTPGVAYLTKEMDAELGVMISASHNPVADNGIKFFGSDGFKLSDDQENEIEALLDEENPDLPRPVGNEIVHYSDYFEGAQKYLSYIKSTIDVNLDGLKIALDGANGSTSQLAPFLFGDLEADTEVIGCSPDGYNINEGVGSTHPEALAKTVVETESDFGLAFDGDGDRLIAVDEKGNIVDGDQIMFIIGQEMAKNQELNDNMIVSTVMSNLGFYKALEAEGIKSNKTKVGDRYVVEEMRKGNYNLGGEQSGHIVLMDYNTTGDGLLTGVQLAAVVKLTGKSLSELAEQMKKYPQSLINVRVTDKHGVTDNEDVKAEMDRVEADMNGEGRILVRPSGTEPLVRVMVEAATDEKAQSYAQQIADVVEEKMGLDN.

The active-site Phosphoserine intermediate is S102. Residues S102, D242, D244, and D246 each contribute to the Mg(2+) site. S102 is subject to Phosphoserine.

The protein belongs to the phosphohexose mutase family. It depends on Mg(2+) as a cofactor. In terms of processing, activated by phosphorylation.

The catalysed reaction is alpha-D-glucosamine 1-phosphate = D-glucosamine 6-phosphate. Catalyzes the conversion of glucosamine-6-phosphate to glucosamine-1-phosphate. This is Phosphoglucosamine mutase from Staphylococcus carnosus (strain TM300).